Reading from the N-terminus, the 310-residue chain is tRNA uridine(34) hydroxylase (310 aa).

The region spanning 134–232 is the Rhodanese domain; that stretch reads DDPDTLLIDT…YFEEVSQTES (99 aa). The active-site Cysteine persulfide intermediate is the Cys192.

Belongs to the TrhO family.

The catalysed reaction is uridine(34) in tRNA + AH2 + O2 = 5-hydroxyuridine(34) in tRNA + A + H2O. In terms of biological role, catalyzes oxygen-dependent 5-hydroxyuridine (ho5U) modification at position 34 in tRNAs. The polypeptide is tRNA uridine(34) hydroxylase (Prochlorococcus marinus (strain MIT 9313)).